The sequence spans 306 residues: MSQYHIPVMLSEVLEVLAPKGYESYLDCTFGAGGYSNAILKSCYCSVTSLDCDPHVIERVEQIKQDYGERFSFIKTNFADSFGKLKQQKFDGIVMDLGVSSMQLDIAGRGFSFLYDGPLDMRMSAQGFSAEEFVNTADEEEISDVIYKYGNESLSRRIAKNIIKYRKIARIDSTRKLAEIVRYSIGFRKGKIDSATKTFQAIRIYINNELGELERFLANVKNILKKNGRLVVVSFHSLEDRIVKNFFKENSAKPVARSKYAKDEIKIDQNKWLEIITHKVLTPSSQEIRLNVRARSAKLRAAKKIL.

S-adenosyl-L-methionine contacts are provided by residues 33–35, Asp51, Phe78, Asp96, and Gln103; that span reads GGY.

It belongs to the methyltransferase superfamily. RsmH family.

It localises to the cytoplasm. It catalyses the reaction cytidine(1402) in 16S rRNA + S-adenosyl-L-methionine = N(4)-methylcytidine(1402) in 16S rRNA + S-adenosyl-L-homocysteine + H(+). In terms of biological role, specifically methylates the N4 position of cytidine in position 1402 (C1402) of 16S rRNA. The sequence is that of Ribosomal RNA small subunit methyltransferase H from Rickettsia typhi (strain ATCC VR-144 / Wilmington).